A 238-amino-acid polypeptide reads, in one-letter code: uncharacterized protein (238 aa).

A run of 5 helical transmembrane segments spans residues 6 to 26 (METLIRLFVSILIICVLALMI), 45 to 65 (FILLYFCGFKYLILLLSFFIL), 98 to 118 (IPILFAILAIFGFNWALIGYI), 160 to 180 (IFGTLAGVLGAFLIGLFGYLL), and 186 to 206 (IVLCGTAGGIAGNLADSLVGA).

This sequence belongs to the TMEM19 family.

The protein localises to the cell membrane. This is an uncharacterized protein from Methanocaldococcus jannaschii (strain ATCC 43067 / DSM 2661 / JAL-1 / JCM 10045 / NBRC 100440) (Methanococcus jannaschii).